A 1025-amino-acid chain; its full sequence is MKFFALFIYRPVATILLSVAITLCGILGFRMLPVAPLPQVDFPVIMVSASLPGASPETMASSVATPLERSLGRIAGVSEMTSSSSLGSTRIILQFDFDRDINGAARDVQAAINAAQSLLPSGMPSRPTYRKANPSDAPIMILTLTSDTYSQGELYDFASTQLAPTISQIDGVGDVDVGGSSLPAVRVGLNPQALFNQGVSLDDVRTAISNANVRKPQGALEDGTHRWQIQTNDELKTAAEYQPLIIHYNNGGAVRLGDVATVTDSVQDVRNAGMTNAKPAILLMIRKLPEANIIQTVDSIRAKLPELQETIPAAIDLQIAQDRSPTIRASLEEVEQTLIISVALVILVVFLFLRSGRATIIPAVAVPVSLIGTFAAMYLCGFSLNNLSLMALTIATGFVVDDAIVVLENIARHLEAGMKPLQAALQGTREVGFTVLSMSLSLVAVFLPLLLMGGLPGRLLREFAVTLSVAIGISLLVSLTLTPMMCGWMLKASKPREQKRLRGFGRMLVALQQGYGKSLKWVLNHTRLVGVVLLGTIALNIWLYISIPKTFFPEQDTGVLMGGIQADQSISFQAMRGKLQDFMKIIRDDPAVDNVTGFTGGSRVNSGMMFITLKPRGERSETAQQIIDRLRVKLAKEPGANLFLMAVQDIRVGGRQSNASYQYTLLSDDLAALREWEPKIRKKLATLPELADVNSDQQDNGAEMNLVYDRDTMARLGIDVQAANSLLNNAFGQRQISTIYQPMNQYKVVMEVDPRYTQDISALEKMFVINNEGKAIPLSYFAKWQPANAPLSVNHQGLSAASTISFNLPTGKSLSDASAAIDRAMTQLGVPSTVRGSFAGTAQVFQETMNSQVILIIAAIATVYIVLGILYESYVHPLTILSTLPSAGVGALLALELFNAPFSLIALIGIMLLIGIVKKNAIMMVDFALEAQRHGNLTPQEAIFQACLLRFRPIMMTTLAALFGALPLVLSGGDGSELRQPLGITIVGGLVMSQLLTLYTTPVVYLFFDRLRLRFSRKPKQTVTE.

The next 12 membrane-spanning stretches (helical) occupy residues 3-23, 333-353, 360-380, 387-407, 431-451, 463-483, 528-548, 853-873, 875-895, 897-917, 953-973, and 984-1004; these read FFALFIYRPVATILLSVAITL, EVEQTLIISVALVILVVFLFL, IIPAVAVPVSLIGTFAAMYLC, LSLMALTIATGFVVDDAIVVL, VGFTVLSMSLSLVAVFLPLLL, FAVTLSVAIGISLLVSLTLTP, LVGVVLLGTIALNIWLYISIP, VILIIAAIATVYIVLGILYES, VHPLTILSTLPSAGVGALLAL, LFNAPFSLIALIGIMLLIGIV, PIMMTTLAALFGALPLVLSGG, and ITIVGGLVMSQLLTLYTTPVV.

It belongs to the resistance-nodulation-cell division (RND) (TC 2.A.6) family. MdtC subfamily. Part of a tripartite efflux system composed of MdtA, MdtB and MdtC. MdtC forms a heteromultimer with MdtB.

It is found in the cell inner membrane. Functionally, the MdtABC tripartite complex confers resistance against novobiocin and deoxycholate. The protein is Multidrug resistance protein MdtC of Escherichia coli (strain 55989 / EAEC).